Consider the following 270-residue polypeptide: Formamidopyrimidine-DNA glycosylase (270 aa).

Catalysis depends on proline 2, which acts as the Schiff-base intermediate with DNA. The Proton donor role is filled by glutamate 3. The active-site Proton donor; for beta-elimination activity is the lysine 58. DNA-binding residues include histidine 92, arginine 111, and arginine 153. The FPG-type zinc finger occupies 238 to 270 (SVYGASVCPVCGGALRQIRLAQRGTWFCPRCQR). Catalysis depends on arginine 260, which acts as the Proton donor; for delta-elimination activity.

Belongs to the FPG family. As to quaternary structure, monomer. Zn(2+) is required as a cofactor.

It carries out the reaction Hydrolysis of DNA containing ring-opened 7-methylguanine residues, releasing 2,6-diamino-4-hydroxy-5-(N-methyl)formamidopyrimidine.. The enzyme catalyses 2'-deoxyribonucleotide-(2'-deoxyribose 5'-phosphate)-2'-deoxyribonucleotide-DNA = a 3'-end 2'-deoxyribonucleotide-(2,3-dehydro-2,3-deoxyribose 5'-phosphate)-DNA + a 5'-end 5'-phospho-2'-deoxyribonucleoside-DNA + H(+). Involved in base excision repair of DNA damaged by oxidation or by mutagenic agents. Acts as a DNA glycosylase that recognizes and removes damaged bases. Has a preference for oxidized purines, such as 7,8-dihydro-8-oxoguanine (8-oxoG). Has AP (apurinic/apyrimidinic) lyase activity and introduces nicks in the DNA strand. Cleaves the DNA backbone by beta-delta elimination to generate a single-strand break at the site of the removed base with both 3'- and 5'-phosphates. This Halorhodospira halophila (strain DSM 244 / SL1) (Ectothiorhodospira halophila (strain DSM 244 / SL1)) protein is Formamidopyrimidine-DNA glycosylase.